A 140-amino-acid polypeptide reads, in one-letter code: Small ribosomal subunit protein uS19 (140 aa).

The interval 55 to 74 (LAEARESGTEETANNPIRTH) is disordered.

It belongs to the universal ribosomal protein uS19 family.

Protein S19 forms a complex with S13 that binds strongly to the 16S ribosomal RNA. In Halobacterium salinarum (strain ATCC 29341 / DSM 671 / R1), this protein is Small ribosomal subunit protein uS19.